Consider the following 336-residue polypeptide: Anthranilate phosphoribosyltransferase (336 aa).

Residues Gly-83, Gly-86–Asp-87, Thr-91, Asn-93–Thr-96, Lys-111–Ser-119, and Ser-123 contribute to the 5-phospho-alpha-D-ribose 1-diphosphate site. Residue Gly-83 coordinates anthranilate. Residue Ser-95 participates in Mg(2+) binding. Asn-114 is an anthranilate binding site. Residue Arg-169 participates in anthranilate binding. 2 residues coordinate Mg(2+): Asp-227 and Glu-228.

The protein belongs to the anthranilate phosphoribosyltransferase family. In terms of assembly, homodimer. Requires Mg(2+) as cofactor.

It catalyses the reaction N-(5-phospho-beta-D-ribosyl)anthranilate + diphosphate = 5-phospho-alpha-D-ribose 1-diphosphate + anthranilate. Its pathway is amino-acid biosynthesis; L-tryptophan biosynthesis; L-tryptophan from chorismate: step 2/5. Functionally, catalyzes the transfer of the phosphoribosyl group of 5-phosphorylribose-1-pyrophosphate (PRPP) to anthranilate to yield N-(5'-phosphoribosyl)-anthranilate (PRA). In Vibrio campbellii (strain ATCC BAA-1116), this protein is Anthranilate phosphoribosyltransferase.